We begin with the raw amino-acid sequence, 20 residues long: GLLASLGKVLGGYLAEKLKP.

As to expression, expressed by the skin dorsal glands.

The protein resides in the secreted. In terms of biological role, has no antimicrobial activity. Strongly inhibits the formation of NO by neuronal nitric oxide synthase at micromolar concentrations. The protein is Dahlein-5.3 of Ranoidea dahlii (Dahl's aquatic frog).